Reading from the N-terminus, the 152-residue chain is Superoxide dismutase [Cu-Zn] 1 (152 aa).

Cu cation-binding residues include H45, H47, and H62. A disulfide bridge connects residues C56 and C145. Zn(2+)-binding residues include H62, H70, H79, and D82. Cu cation is bound at residue H119.

The protein belongs to the Cu-Zn superoxide dismutase family. Homodimer. Requires Cu cation as cofactor. The cofactor is Zn(2+).

The protein resides in the cytoplasm. The enzyme catalyses 2 superoxide + 2 H(+) = H2O2 + O2. Destroys radicals which are normally produced within the cells and which are toxic to biological systems. This chain is Superoxide dismutase [Cu-Zn] 1 (SODCC.1), found in Solanum lycopersicum (Tomato).